The following is a 187-amino-acid chain: Protein GrpE (187 aa).

The tract at residues methionine 1–glutamate 25 is disordered.

This sequence belongs to the GrpE family. In terms of assembly, homodimer.

The protein resides in the cytoplasm. In terms of biological role, participates actively in the response to hyperosmotic and heat shock by preventing the aggregation of stress-denatured proteins, in association with DnaK and GrpE. It is the nucleotide exchange factor for DnaK and may function as a thermosensor. Unfolded proteins bind initially to DnaJ; upon interaction with the DnaJ-bound protein, DnaK hydrolyzes its bound ATP, resulting in the formation of a stable complex. GrpE releases ADP from DnaK; ATP binding to DnaK triggers the release of the substrate protein, thus completing the reaction cycle. Several rounds of ATP-dependent interactions between DnaJ, DnaK and GrpE are required for fully efficient folding. This Azotobacter vinelandii (strain DJ / ATCC BAA-1303) protein is Protein GrpE.